The primary structure comprises 77 residues: Secapin (77 aa).

The first 32 residues, 1–32 (MKNYSKNATYLITVLLFSFVAMLLIIPSKCEA), serve as a signal peptide directing secretion. Residues 33 to 52 (VSNDMQPLEARTADLVQQPR) constitute a propeptide that is removed on maturation. A disulfide bridge links Cys-61 with Cys-72.

Belongs to the secapin family. In terms of tissue distribution, expressed by the venom gland.

The protein resides in the secreted. Functionally, nontoxic peptide. This is Secapin from Apis cerana cerana (Oriental honeybee).